Here is a 1134-residue protein sequence, read N- to C-terminus: Nck-associated protein 1-like (1134 aa).

The interval 638 to 671 (KAKNKKSMKQRQAPRKGEPERDKPGAESHRKNRS) is disordered. Over residues 639–651 (AKNKKSMKQRQAP) the composition is skewed to basic residues. The span at 652–666 (RKGEPERDKPGAESH) shows a compositional bias: basic and acidic residues. The helical transmembrane segment at 999–1019 (LLLIFLAVSLPLLATDPSSFF) threads the bilayer.

In hematopoietic cells, component of the WAVE2 complex composed of ABI1, CYFIP1/SRA1, NCKAP1L/HEM1 and WASF2/WAVE2. Interacts with ARHGAP4, PIK3C3/VPS34 and PPP1R12A/MYPT1. Interacts with mammalian target of rapamycin complex 2 (mTORC2) components, including MTOR and RICTOR. Predominantly expressed in developing and mature hematopoietic cells. Also detected in urogenital tissues, including testis.

It is found in the membrane. Its subcellular location is the cytoplasm. Functionally, essential hematopoietic-specific regulator of the actin cytoskeleton. Controls lymphocyte development, activation, proliferation and homeostasis, erythrocyte membrane stability, as well as phagocytosis and migration by neutrophils and macrophages. Component of the WAVE2 complex which signals downstream of RAC to stimulate F-actin polymerization. Required for stabilization and/or translation of the WAVE2 complex proteins in hematopoietic cells. Within the WAVE2 complex, enables the cortical actin network to restrain excessive degranulation and granule release by T-cells. Required for efficient T-lymphocyte and neutrophil migration. Exhibits complex cycles of activation and inhibition to generate waves of propagating the assembly with actin. Also involved in mechanisms WAVE independent to regulate myosin and actin polymerization during neutrophil chemotaxis. In T-cells, required for proper mechanistic target of rapamycin complex 2 (mTORC2)-dependent AKT phosphorylation, cell proliferation and cytokine secretion, including that of IL2 and TNF. The polypeptide is Nck-associated protein 1-like (Mus musculus (Mouse)).